Consider the following 147-residue polypeptide: Large ribosomal subunit protein uL16 (147 aa).

The disordered stretch occupies residues 1 to 20 (MLMPKKVKHRKVQRGRMKGK).

The protein belongs to the universal ribosomal protein uL16 family. Part of the 50S ribosomal subunit.

Its function is as follows. Binds 23S rRNA and is also seen to make contacts with the A and possibly P site tRNAs. This Clostridium kluyveri (strain ATCC 8527 / DSM 555 / NBRC 12016 / NCIMB 10680 / K1) protein is Large ribosomal subunit protein uL16.